Consider the following 227-residue polypeptide: PKHD-type hydroxylase GOX0559 (227 aa).

The 101-residue stretch at 78–178 folds into the Fe2OG dioxygenase domain; the sequence is RVYPPLFNRY…RWASFFWSQS (101 aa). Fe cation is bound by residues histidine 96, aspartate 98, and histidine 159. Arginine 169 contributes to the 2-oxoglutarate binding site.

Requires Fe(2+) as cofactor. L-ascorbate is required as a cofactor.

This chain is PKHD-type hydroxylase GOX0559, found in Gluconobacter oxydans (strain 621H) (Gluconobacter suboxydans).